An 80-amino-acid chain; its full sequence is Cell division protein ZapB (80 aa).

Residues 3–80 (FEVFEKLESK…ALLGKMEDVQ (78 aa)) are a coiled coil.

It belongs to the ZapB family. In terms of assembly, homodimer. The ends of the coiled-coil dimer bind to each other, forming polymers. Interacts with FtsZ.

The protein resides in the cytoplasm. Functionally, non-essential, abundant cell division factor that is required for proper Z-ring formation. It is recruited early to the divisome by direct interaction with FtsZ, stimulating Z-ring assembly and thereby promoting cell division earlier in the cell cycle. Its recruitment to the Z-ring requires functional FtsA or ZipA. In Proteus mirabilis (strain HI4320), this protein is Cell division protein ZapB.